The primary structure comprises 539 residues: MRQLAAGSLLSLLKVLLLPLAPAPAQDANSASTPGSPLSPTEYERFFALLTPTWKAETTCRLRATHGCRNPTLVQLDQYENHGLVPDGAVCSDLPYASWFESFCQFTQYRCSNHVYYAKRVRCSQPVSILSPNSLKEVDTSSEVPITTMTSPVSSHITATGRQVFQPWPERLNNNVEELLQSSLSLGGQEQGQEHKQEHKQEQGQEHKQDEGQEQEEQEEEQEEEGKQEEGQGTEESLEAMSGLQADSEPKFQSEFVSSNPFSFTPRVREVESTPMMMENIQELIRSAQEMDEMGDVYEEENIWRAQSPGSLLQLPHVDALLVLCYSIVENTCVITPTAKAWQYLEDETLGFGKSVCDSLGRRHLAACSLCDFCSLKLEQCHSETNLQRQQCDNSHKTPFISPLLASQSMSIGTQIGTLKSGRFYGLDLYGGLRMDFWCARLATKGCEDNRVASWLQTEFLSFQDGDFPTKICDTEYVQYPNYCAFKSQQCMMRNRDRKVSRMRCLQNETYTVLTQAKSEDLVLRWSQEFSTLTLGQAG.

The signal sequence occupies residues 1 to 25 (MRQLAAGSLLSLLKVLLLPLAPAPA). The segment at 26–106 (QDANSASTPG…ASWFESFCQF (81 aa)) is pro-ACR binding. Residues 26–269 (QDANSASTPG…NPFSFTPRVR (244 aa)) constitute a propeptide, removed in active form. The disordered stretch occupies residues 186 to 259 (LGGQEQGQEH…PKFQSEFVSS (74 aa)). Over residues 192 to 211 (GQEHKQEHKQEQGQEHKQDE) the composition is skewed to basic and acidic residues. Residues 212 to 238 (GQEQEEQEEEQEEEGKQEEGQGTEESL) show a composition bias toward acidic residues. Residues 315-423 (LPHVDALLVL…TQIGTLKSGR (109 aa)) form a pro-ACR binding region.

In terms of assembly, binds specifically to the 55- and 53-kDa proacrosins and the 49-kDa acrosin intermediate, but is not capable of binding 43-kDa acrosin intermediate and 32-kDa mature acrosin. Post-translationally, the N-terminus is blocked. Synthesized as a 60-kDa precursor, the 35-kDa mature form is post-translationally produced by the removal of the N-terminal half of the precursor during sperm maturation in the testis and/or epididymis. In terms of processing, phosphorylated on Tyr residues in capacitated sperm. Specifically expressed in testis.

It is found in the secreted. It localises to the cytoplasmic vesicle. The protein localises to the secretory vesicle. Its subcellular location is the acrosome. In terms of biological role, acrosomal protein that maintains proacrosin (pro-ACR) as an enzymatically inactive zymogen in the acrosome. Involved also in the acrosome formation. This Sus scrofa (Pig) protein is Acrosin-binding protein.